A 256-amino-acid chain; its full sequence is Pimeloyl-[acyl-carrier protein] methyl ester esterase (256 aa).

The region spanning 15–242 (HLVLLHGWGL…AAHAPFISHP (228 aa)) is the AB hydrolase-1 domain. Substrate contacts are provided by residues Trp-22, 82 to 83 (SL), and 143 to 147 (FLALQ). Catalysis depends on Ser-82, which acts as the Nucleophile. Residues Asp-207 and His-235 contribute to the active site. Residue His-235 coordinates substrate.

The protein belongs to the AB hydrolase superfamily. Carboxylesterase BioH family. Monomer.

It localises to the cytoplasm. The catalysed reaction is 6-carboxyhexanoyl-[ACP] methyl ester + H2O = 6-carboxyhexanoyl-[ACP] + methanol + H(+). The protein operates within cofactor biosynthesis; biotin biosynthesis. Functionally, the physiological role of BioH is to remove the methyl group introduced by BioC when the pimeloyl moiety is complete. It allows to synthesize pimeloyl-ACP via the fatty acid synthetic pathway through the hydrolysis of the ester bonds of pimeloyl-ACP esters. The protein is Pimeloyl-[acyl-carrier protein] methyl ester esterase of Escherichia coli O6:K15:H31 (strain 536 / UPEC).